The primary structure comprises 155 residues: Small ribosomal subunit protein uS7cz/uS7cy (155 aa).

This sequence belongs to the universal ribosomal protein uS7 family. In terms of assembly, part of the 30S ribosomal subunit.

Its subcellular location is the plastid. It is found in the chloroplast. Its function is as follows. One of the primary rRNA binding proteins, it binds directly to 16S rRNA where it nucleates assembly of the head domain of the 30S subunit. The sequence is that of Small ribosomal subunit protein uS7cz/uS7cy (rps7-A) from Coffea arabica (Arabian coffee).